Consider the following 252-residue polypeptide: MAARKAGLIALFDVDGTLTAPRKESTPQMLKFMQELRKVVTVGVVGGSDLVKISEQLGNTVTNDYDYVFSENGLVAHKDGKLIGKQSLKSHLGDEKLKEFINFTLHYIADLDIPIKRGTFIEFRSGMLNVSPIGRNCSQEERDEFEKYDKVQKIRETMVSVLREKFAHFNLTFSIGGQISFDVFPQGWDKTYCLRYLEEFNEIHFFGDKTYKGGNDHEIYESERTVGHTVTSPEETLKQCSVLFLGKDNGSS.

The active-site Nucleophile is Asp-13. The Mg(2+) site is built by Asp-13 and Asp-15. Asp-15 serves as the catalytic Proton donor/acceptor. Alpha-D-mannose 1-phosphate contacts are provided by Arg-22, Arg-124, Arg-135, Arg-142, Ser-180, and Asp-182. Residues Asp-208, Tyr-220, and Thr-225 each coordinate Mg(2+).

The protein belongs to the eukaryotic PMM family. Homodimer. Mg(2+) is required as a cofactor.

It is found in the cytoplasm. It carries out the reaction alpha-D-mannose 1-phosphate = D-mannose 6-phosphate. It functions in the pathway nucleotide-sugar biosynthesis; GDP-alpha-D-mannose biosynthesis; alpha-D-mannose 1-phosphate from D-fructose 6-phosphate: step 2/2. In terms of biological role, catalyzes the interconversion of mannose-6-phosphate to mannose-1-phosphate, the precursor for the synthesis of GDP-mannose. GDP-mannose is an essential sugar nucleotide for the synthesis of D-mannose-containing cell wall polysaccharides (galactomannans and glucomannans), glycolipids, glycoproteins and the antioxidant L-ascorbate. Can complement the yeast temperature-sensitive mutant sec53-6. The chain is Phosphomannomutase from Solanum lycopersicum (Tomato).